We begin with the raw amino-acid sequence, 918 residues long: Signal transduction histidine-protein kinase BarA (918 aa).

The Cytoplasmic segment spans residues methionine 1–methionine 10. The helical transmembrane segment at methionine 11–valine 31 threads the bilayer. Residues histidine 32 to lysine 175 lie on the Periplasmic side of the membrane. A helical transmembrane segment spans residues glutamate 176–tryptophan 196. The Cytoplasmic segment spans residues arginine 197–glycine 918. Residues arginine 200–glutamate 252 enclose the HAMP domain. Positions asparagine 299–leucine 520 constitute a Histidine kinase domain. Histidine 302 is subject to Phosphohistidine; by autocatalysis. One can recognise a Response regulatory domain in the interval threonine 669 to lysine 785. A 4-aspartylphosphate modification is found at aspartate 718. Residues lysine 822 to glycine 918 enclose the HPt domain. At histidine 861 the chain carries Phosphohistidine.

Activation requires a sequential transfer of a phosphate group from a His in the primary transmitter domain, to an Asp in the receiver domain and to a His in the secondary transmitter domain.

Its subcellular location is the cell inner membrane. It catalyses the reaction ATP + protein L-histidine = ADP + protein N-phospho-L-histidine.. Member of the two-component regulatory system UvrY/BarA involved in the regulation of carbon metabolism via the CsrA/CsrB regulatory system. Phosphorylates UvrY, probably via a four-step phosphorelay. The protein is Signal transduction histidine-protein kinase BarA (barA) of Shigella flexneri.